Reading from the N-terminus, the 454-residue chain is UPF0210 protein EUBREC_1565 (454 aa).

The protein belongs to the UPF0210 family. Homodimer.

This is UPF0210 protein EUBREC_1565 from Agathobacter rectalis (strain ATCC 33656 / DSM 3377 / JCM 17463 / KCTC 5835 / VPI 0990) (Eubacterium rectale).